The chain runs to 429 residues: 3-isopropylmalate dehydratase large subunit (429 aa).

The [4Fe-4S] cluster site is built by C303, C363, and C366.

The protein belongs to the aconitase/IPM isomerase family. LeuC type 2 subfamily. As to quaternary structure, heterodimer of LeuC and LeuD. [4Fe-4S] cluster is required as a cofactor.

It catalyses the reaction (2R,3S)-3-isopropylmalate = (2S)-2-isopropylmalate. The protein operates within amino-acid biosynthesis; L-leucine biosynthesis; L-leucine from 3-methyl-2-oxobutanoate: step 2/4. Catalyzes the isomerization between 2-isopropylmalate and 3-isopropylmalate, via the formation of 2-isopropylmaleate. This chain is 3-isopropylmalate dehydratase large subunit, found in Caldicellulosiruptor bescii (strain ATCC BAA-1888 / DSM 6725 / KCTC 15123 / Z-1320) (Anaerocellum thermophilum).